Here is a 144-residue protein sequence, read N- to C-terminus: MVRERTKKLRGGHYGRGFKAGRGKGKKGGSGNAGMGKHKWIWMVKYDPLHFGGKGFTSHHISQVEVPINLGDVEYMYESLKRDGFVREENGEIIVDLRAAGYDKLLGNGNFTVKSTIIIDKATEKAISKLSAIGSKIENDGSSA.

Basic residues predominate over residues 1 to 13; the sequence is MVRERTKKLRGGH. Residues 1 to 32 are disordered; sequence MVRERTKKLRGGHYGRGFKAGRGKGKKGGSGN.

Belongs to the universal ribosomal protein uL15 family. Part of the 50S ribosomal subunit.

Its function is as follows. Binds to the 23S rRNA. In Thermoplasma acidophilum (strain ATCC 25905 / DSM 1728 / JCM 9062 / NBRC 15155 / AMRC-C165), this protein is Large ribosomal subunit protein uL15.